Reading from the N-terminus, the 732-residue chain is Adducin-related protein 1 (732 aa).

Disordered regions lie at residues 1 to 22 (MIGR…DPEY) and 684 to 732 (TRFS…KKDK). Residues 685–705 (RFSSTQGTSEGNTTSRSCTTA) are compositionally biased toward polar residues. The span at 716–732 (KKKKKKGFLSFMRKKDK) shows a compositional bias: basic residues.

This sequence belongs to the aldolase class II family. Adducin subfamily.

Its subcellular location is the cytoplasm. It localises to the cytoskeleton. It is found in the cell membrane. Its function is as follows. Membrane-cytoskeleton-associated protein that promotes the assembly of the spectrin-actin network. Plays a role in time-dependent memmory loss and the retention of conditioned behavior over time. This Caenorhabditis elegans protein is Adducin-related protein 1.